Reading from the N-terminus, the 514-residue chain is Monocarboxylate transporter 10 (514 aa).

Residues 1 to 64 (MVPSQEEPAA…TGNQEPPEPP (64 aa)) form a disordered region. Residues 1–65 (MVPSQEEPAA…GNQEPPEPPE (65 aa)) are Cytoplasmic-facing. Residues 66–86 (GGWGWLVMLAAMWCNGSVFGI) form a helical membrane-spanning segment. Over 87–113 (QNAYGVLFVSMLETFGAKDDDNMAFKA) the chain is Extracellular. A helical membrane pass occupies residues 114-134 (AWVGSLSMGMIFFCCPIVSVF). Residues 135 to 143 (TDMFGCRRT) are Cytoplasmic-facing. The chain crosses the membrane as a helical span at residues 144–164 (AVLGAAVGFVGLMSSSFVSSI). Over 165 to 170 (EPLYFT) the chain is Extracellular. A helical transmembrane segment spans residues 171-191 (YGVVFACGCSFAYQPSLVILG). At 192-199 (HYFKKRLG) the chain is on the cytoplasmic side. Residues 200 to 220 (LVNGIVTAGSSVFTILLPLLL) form a helical membrane-spanning segment. Topologically, residues 221-227 (GNLTSTV) are extracellular. A helical membrane pass occupies residues 228–248 (GLCYTLRILCIFMFVLFLAGF). Topologically, residues 249 to 290 (TYRPLVPSSKEKESEDSRSSFFSRRKLSPPKKIFNFALFKET) are cytoplasmic. Serine 262 carries the phosphoserine modification. A helical transmembrane segment spans residues 291-311 (AYAVWAAGIPLALFGYFVPYV). Topologically, residues 312 to 328 (HLMNHVKERFKDVNNKE) are extracellular. Residues 329-349 (VLFMCIGVTSGVGRLLFGRIA) form a helical membrane-spanning segment. Residue aspartate 350 is a topological domain, cytoplasmic. Residues 351 to 371 (YLPGVKKVYLQVLSFFFIGLT) traverse the membrane as a helical segment. Topologically, residues 372–395 (SMMIPLCSVFGALIALCLIMGLFD) are extracellular. A helical transmembrane segment spans residues 396–416 (GCFISIMAPIAFELVGPQDAS). The Cytoplasmic portion of the chain corresponds to 417–418 (QA). The helical transmembrane segment at 419–439 (IGFLLGFMSIPMTVGPPVAGL) threads the bilayer. Over 440–450 (LHDKLGSYDLA) the chain is Extracellular. A helical membrane pass occupies residues 451–471 (FYLAGIPPFIGGAVLCLIPWI). Over 472-514 (HSKKQREISKNTGGEKMEKMLANQSSLLSSSSGIFKKESDSII) the chain is Cytoplasmic. A phosphoserine mark is found at serine 497, serine 500, serine 502, and serine 503.

The protein belongs to the major facilitator superfamily. Monocarboxylate porter (TC 2.A.1.13) family. Post-translationally, not N-glycosylated. In terms of tissue distribution, strongly expressed in intestine, placenta and liver. In small intestine is detected in the basolateral membrane (at protein level).

It is found in the cell membrane. Its subcellular location is the basolateral cell membrane. It catalyses the reaction L-tryptophan(in) = L-tryptophan(out). The catalysed reaction is L-tyrosine(in) = L-tyrosine(out). It carries out the reaction L-phenylalanine(in) = L-phenylalanine(out). The enzyme catalyses 3,3',5-triiodo-L-thyronine(out) = 3,3',5-triiodo-L-thyronine(in). It catalyses the reaction L-thyroxine(out) = L-thyroxine(in). Its function is as follows. Sodium- and proton-independent thyroid hormones and aromatic acids transporter. Mediates both uptake and efflux of 3,5,3'-triiodothyronine (T3) and 3,5,3',5'-tetraiodothyronine (T4) with high affinity, suggesting a role in the homeostasis of thyroid hormone levels. Responsible for low affinity bidirectional transport of the aromatic amino acids, such as phenylalanine, tyrosine, tryptophan and L-3,4-dihydroxyphenylalanine (L-dopa). Plays an important role in homeostasis of aromatic amino acids. The polypeptide is Monocarboxylate transporter 10 (Slc16a10) (Rattus norvegicus (Rat)).